The sequence spans 299 residues: Urease accessory protein UreD (299 aa).

The protein belongs to the UreD family. As to quaternary structure, ureD, UreF and UreG form a complex that acts as a GTP-hydrolysis-dependent molecular chaperone, activating the urease apoprotein by helping to assemble the nickel containing metallocenter of UreC. The UreE protein probably delivers the nickel.

Its subcellular location is the cytoplasm. In terms of biological role, required for maturation of urease via the functional incorporation of the urease nickel metallocenter. The polypeptide is Urease accessory protein UreD (Haloarcula marismortui (strain ATCC 43049 / DSM 3752 / JCM 8966 / VKM B-1809) (Halobacterium marismortui)).